We begin with the raw amino-acid sequence, 232 residues long: Flagellar L-ring protein (232 aa).

Residues 1–21 form the signal peptide; sequence MQKYALHAYPVMALMVATLTG. The N-palmitoyl cysteine moiety is linked to residue Cys22. A lipid anchor (S-diacylglycerol cysteine) is attached at Cys22.

Belongs to the FlgH family. As to quaternary structure, the basal body constitutes a major portion of the flagellar organelle and consists of four rings (L,P,S, and M) mounted on a central rod.

Its subcellular location is the cell outer membrane. It localises to the bacterial flagellum basal body. Functionally, assembles around the rod to form the L-ring and probably protects the motor/basal body from shearing forces during rotation. The protein is Flagellar L-ring protein of Salmonella choleraesuis (strain SC-B67).